The following is a 533-amino-acid chain: D-3-phosphoglycerate dehydrogenase (533 aa).

Alanine 2 carries the post-translational modification N-acetylalanine. Phosphoserine is present on serine 14. At lysine 21 the chain carries N6-acetyllysine; alternate. Lysine 21 is covalently cross-linked (Glycyl lysine isopeptide (Lys-Gly) (interchain with G-Cter in SUMO1); alternate). Lysine 21 is covalently cross-linked (Glycyl lysine isopeptide (Lys-Gly) (interchain with G-Cter in SUMO2); alternate). At lysine 58 the chain carries N6-acetyllysine. NAD(+) is bound by residues threonine 78, 155 to 156 (RI), aspartate 175, threonine 207, 234 to 236 (CAR), and aspartate 260. Threonine 78 carries the post-translational modification Phosphothreonine. The active site involves arginine 236. Glutamate 265 is a catalytic residue. Histidine 283 serves as the catalytic Proton donor. NAD(+) is bound at residue 283–286 (HLGA).

It belongs to the D-isomer specific 2-hydroxyacid dehydrogenase family. Homotetramer.

It carries out the reaction (2R)-3-phosphoglycerate + NAD(+) = 3-phosphooxypyruvate + NADH + H(+). The enzyme catalyses (R)-2-hydroxyglutarate + NAD(+) = 2-oxoglutarate + NADH + H(+). It catalyses the reaction (S)-malate + NAD(+) = oxaloacetate + NADH + H(+). It participates in amino-acid biosynthesis; L-serine biosynthesis; L-serine from 3-phospho-D-glycerate: step 1/3. In terms of biological role, catalyzes the reversible oxidation of 3-phospho-D-glycerate to 3-phosphonooxypyruvate, the first step of the phosphorylated L-serine biosynthesis pathway. Also catalyzes the reversible oxidation of 2-hydroxyglutarate to 2-oxoglutarate and the reversible oxidation of (S)-malate to oxaloacetate. The protein is D-3-phosphoglycerate dehydrogenase (PHGDH) of Pan troglodytes (Chimpanzee).